A 462-amino-acid chain; its full sequence is MNTRIERDTLGEMHVPQDKLWGAQTQRSYENFHIGTEKMPMEIIYAFALLKKAAANVNKKLGQLSAEKADAITWAANEVLAGKHDDHFPLFVWQTGSGTQSNMNMNEVLARRGNQLLQEKGLDVTIHPNDDVNRSQSSNDTFPTAMHIAAYNKLDDHLLPTLQMFKQTLHQKAKQFDDVIKLGRTHLQDATPLTLGQEISGWARMLEKTEQMIRESMIYLQELAIGGTAVGTGVNAHPKFGEMVAADIANETGKPFKSAANKFHALTSHDELVHTHGALKALAADLFKIANDIRWLASGPRGGLGELIIPANEPGSSIMPGKVNPTQSEALTMITSQVIGNDATIAFAASQGNFELNVFKPVIIYNFLQSTTLLTDGLRTFHDKCLIGLEANETIIKKHLNESLMLVTALNPHIGYENAAKIAKKAHAEGLTLKEAAMQSGLLTEEEFEKMVDPAKMVHPQG.

Residues 97–99 (SGT), 127–130 (HPND), 137–139 (SSN), and Thr-185 each bind substrate. His-186 functions as the Proton donor/acceptor in the catalytic mechanism. The active site involves Ser-316. Substrate contacts are provided by residues Ser-317 and 322-324 (KVN).

Belongs to the class-II fumarase/aspartase family. Fumarase subfamily. In terms of assembly, homotetramer.

It is found in the cytoplasm. It catalyses the reaction (S)-malate = fumarate + H2O. It participates in carbohydrate metabolism; tricarboxylic acid cycle; (S)-malate from fumarate: step 1/1. In terms of biological role, involved in the TCA cycle. Catalyzes the stereospecific interconversion of fumarate to L-malate. The polypeptide is Fumarate hydratase class II (Halalkalibacterium halodurans (strain ATCC BAA-125 / DSM 18197 / FERM 7344 / JCM 9153 / C-125) (Bacillus halodurans)).